The chain runs to 388 residues: S-adenosylmethionine synthase 1 (388 aa).

Glu11 is a Mg(2+) binding site. Position 17 (His17) interacts with ATP. A K(+)-binding site is contributed by Glu45. Glu58 and Gln101 together coordinate L-methionine. ATP is bound by residues Asp168 to Lys170, Ser233 to Phe236, Asp244, Arg250 to Lys251, Ala267, Lys271, and Lys275. Asp244 lines the L-methionine pocket. Lys275 provides a ligand contact to L-methionine.

This sequence belongs to the AdoMet synthase family. In terms of assembly, homotetramer. It depends on Mn(2+) as a cofactor. Mg(2+) is required as a cofactor. Requires Co(2+) as cofactor. The cofactor is K(+). Mostly in Roots.

It is found in the cytoplasm. The catalysed reaction is L-methionine + ATP + H2O = S-adenosyl-L-methionine + phosphate + diphosphate. It functions in the pathway amino-acid biosynthesis; S-adenosyl-L-methionine biosynthesis; S-adenosyl-L-methionine from L-methionine: step 1/1. Its function is as follows. Catalyzes the formation of S-adenosylmethionine from methionine and ATP. The reaction comprises two steps that are both catalyzed by the same enzyme: formation of S-adenosylmethionine (AdoMet) and triphosphate, and subsequent hydrolysis of the triphosphate. The protein is S-adenosylmethionine synthase 1 (SAMS1) of Pinus contorta (Shore pine).